The primary structure comprises 101 residues: Small ribosomal subunit protein uS14 (101 aa).

The protein belongs to the universal ribosomal protein uS14 family. Part of the 30S ribosomal subunit. Contacts proteins S3 and S10.

Functionally, binds 16S rRNA, required for the assembly of 30S particles and may also be responsible for determining the conformation of the 16S rRNA at the A site. In Gluconacetobacter diazotrophicus (strain ATCC 49037 / DSM 5601 / CCUG 37298 / CIP 103539 / LMG 7603 / PAl5), this protein is Small ribosomal subunit protein uS14.